Consider the following 101-residue polypeptide: Urease subunit beta (101 aa).

Belongs to the urease beta subunit family. Heterotrimer of UreA (gamma), UreB (beta) and UreC (alpha) subunits. Three heterotrimers associate to form the active enzyme.

The protein resides in the cytoplasm. The enzyme catalyses urea + 2 H2O + H(+) = hydrogencarbonate + 2 NH4(+). Its pathway is nitrogen metabolism; urea degradation; CO(2) and NH(3) from urea (urease route): step 1/1. This chain is Urease subunit beta, found in Burkholderia orbicola (strain MC0-3).